Reading from the N-terminus, the 127-residue chain is Large ribosomal subunit protein bL21c (127 aa).

The protein belongs to the bacterial ribosomal protein bL21 family. As to quaternary structure, part of the 50S ribosomal subunit.

The protein resides in the plastid. The protein localises to the chloroplast. Its function is as follows. This protein binds to 23S rRNA. The polypeptide is Large ribosomal subunit protein bL21c (Adiantum capillus-veneris (Maidenhair fern)).